The sequence spans 108 residues: Parvalbumin alpha (108 aa).

Ala1 carries the post-translational modification N-acetylalanine. EF-hand domains follow at residues 37-72 (MSAN…FAAD) and 76-108 (LTDA…VHEA). Ca(2+) contacts are provided by Asp50, Asp52, Ser54, Phe56, Glu58, Glu61, Asp89, Asp91, Asp93, Lys95, and Glu100.

It belongs to the parvalbumin family.

In muscle, parvalbumin is thought to be involved in relaxation after contraction. It binds two calcium ions. The polypeptide is Parvalbumin alpha (Esox lucius (Northern pike)).